Here is a 505-residue protein sequence, read N- to C-terminus: Probable Xaa-Pro aminopeptidase Pc16g13390 (505 aa).

Asp-287, Asp-298, Glu-436, and Glu-475 together coordinate Mn(2+).

The protein belongs to the peptidase M24B family. Mn(2+) is required as a cofactor.

It catalyses the reaction Release of any N-terminal amino acid, including proline, that is linked to proline, even from a dipeptide or tripeptide.. Catalyzes the removal of a penultimate prolyl residue from the N-termini of peptides. This Penicillium rubens (strain ATCC 28089 / DSM 1075 / NRRL 1951 / Wisconsin 54-1255) (Penicillium chrysogenum) protein is Probable Xaa-Pro aminopeptidase Pc16g13390.